The chain runs to 382 residues: tRNA-specific 2-thiouridylase MnmA (382 aa).

Residues 18-25 and L44 contribute to the ATP site; that span reads AMSGGVDS. The Nucleophile role is filled by C112. C112 and C209 are oxidised to a cystine. G136 contacts ATP. Residues 159-161 form an interaction with tRNA region; the sequence is RDQ. The Cysteine persulfide intermediate role is filled by C209.

Belongs to the MnmA/TRMU family.

The protein localises to the cytoplasm. The catalysed reaction is S-sulfanyl-L-cysteinyl-[protein] + uridine(34) in tRNA + AH2 + ATP = 2-thiouridine(34) in tRNA + L-cysteinyl-[protein] + A + AMP + diphosphate + H(+). In terms of biological role, catalyzes the 2-thiolation of uridine at the wobble position (U34) of tRNA, leading to the formation of s(2)U34. This is tRNA-specific 2-thiouridylase MnmA from Methylobacterium sp. (strain 4-46).